Here is a 1676-residue protein sequence, read N- to C-terminus: DNA-directed RNA polymerase subunit beta'-beta'' (1676 aa).

The DNA-directed RNA polymerase subunit beta' stretch occupies residues Met-1 to Ile-582. 4 residues coordinate Zn(2+): Cys-64, Cys-66, Cys-79, and Cys-82. Asp-454, Asp-456, and Asp-458 together coordinate Mg(2+). The interval Phe-583–Leu-1676 is DNA-directed RNA polymerase subunit beta''. Residues Cys-804, Cys-859, Cys-866, and Cys-869 each contribute to the Zn(2+) site.

In the N-terminal section; belongs to the RNA polymerase beta' chain family. RpoC1 subfamily. It in the C-terminal section; belongs to the RNA polymerase beta' chain family. RpoC2 subfamily. As to quaternary structure, in plastids the minimal PEP RNA polymerase catalytic core is composed of four subunits: alpha, beta, beta', and beta''. When a (nuclear-encoded) sigma factor is associated with the core the holoenzyme is formed, which can initiate transcription. Beta' and beta'' are fused in this algae. Requires Mg(2+) as cofactor. It depends on Zn(2+) as a cofactor.

It localises to the plastid. The protein resides in the chloroplast. The catalysed reaction is RNA(n) + a ribonucleoside 5'-triphosphate = RNA(n+1) + diphosphate. In terms of biological role, DNA-dependent RNA polymerase catalyzes the transcription of DNA into RNA using the four ribonucleoside triphosphates as substrates. This chain is DNA-directed RNA polymerase subunit beta'-beta'', found in Cyanidioschyzon merolae (strain NIES-3377 / 10D) (Unicellular red alga).